We begin with the raw amino-acid sequence, 53 residues long: MCATYMFNITVIITHPTPTLRTRGPGFVRNRDLYIYKYKSNLINNLNNMTYIL.

It is found in the mitochondrion. This is an uncharacterized protein from Saccharomyces cerevisiae (strain ATCC 204508 / S288c) (Baker's yeast).